The sequence spans 364 residues: Pyrimidine monooxygenase RutA (364 aa).

FMN-binding positions include 49–50 (IK), asparagine 115, glutamate 124, 140–141 (RY), and serine 190.

This sequence belongs to the NtaA/SnaA/DszA monooxygenase family. RutA subfamily.

The catalysed reaction is uracil + FMNH2 + NADH + O2 = (Z)-3-ureidoacrylate + FMN + NAD(+) + H2O + H(+). The enzyme catalyses thymine + FMNH2 + NADH + O2 = (Z)-2-methylureidoacrylate + FMN + NAD(+) + H2O + H(+). Catalyzes the pyrimidine ring opening between N-3 and C-4 by an unusual flavin hydroperoxide-catalyzed mechanism, adding oxygen atoms in the process to yield ureidoacrylate peracid, that immediately reacts with FMN forming ureidoacrylate and FMN-N(5)-oxide. The FMN-N(5)-oxide reacts spontaneously with NADH to produce FMN. Requires the flavin reductase RutF to regenerate FMN in vivo. This is Pyrimidine monooxygenase RutA from Methylorubrum extorquens (strain ATCC 14718 / DSM 1338 / JCM 2805 / NCIMB 9133 / AM1) (Methylobacterium extorquens).